Here is a 420-residue protein sequence, read N- to C-terminus: Gamma-glutamyl phosphate reductase (420 aa).

It belongs to the gamma-glutamyl phosphate reductase family.

The protein resides in the cytoplasm. It catalyses the reaction L-glutamate 5-semialdehyde + phosphate + NADP(+) = L-glutamyl 5-phosphate + NADPH + H(+). The protein operates within amino-acid biosynthesis; L-proline biosynthesis; L-glutamate 5-semialdehyde from L-glutamate: step 2/2. Functionally, catalyzes the NADPH-dependent reduction of L-glutamate 5-phosphate into L-glutamate 5-semialdehyde and phosphate. The product spontaneously undergoes cyclization to form 1-pyrroline-5-carboxylate. The chain is Gamma-glutamyl phosphate reductase from Neisseria gonorrhoeae (strain ATCC 700825 / FA 1090).